The primary structure comprises 291 residues: 4-diphosphocytidyl-2-C-methyl-D-erythritol kinase (291 aa).

The active site involves Lys-11. 95–105 (PVAAGMAGGSS) provides a ligand contact to ATP. The active site involves Asp-137.

This sequence belongs to the GHMP kinase family. IspE subfamily.

It carries out the reaction 4-CDP-2-C-methyl-D-erythritol + ATP = 4-CDP-2-C-methyl-D-erythritol 2-phosphate + ADP + H(+). The protein operates within isoprenoid biosynthesis; isopentenyl diphosphate biosynthesis via DXP pathway; isopentenyl diphosphate from 1-deoxy-D-xylulose 5-phosphate: step 3/6. In terms of biological role, catalyzes the phosphorylation of the position 2 hydroxy group of 4-diphosphocytidyl-2C-methyl-D-erythritol. The polypeptide is 4-diphosphocytidyl-2-C-methyl-D-erythritol kinase (Lachnoclostridium phytofermentans (strain ATCC 700394 / DSM 18823 / ISDg) (Clostridium phytofermentans)).